The primary structure comprises 446 residues: Mannan endo-1,6-alpha-mannosidase DCW1 (446 aa).

Positions 1–18 (MRLVTLLSGLVSLVSVFG) are cleaved as a signal peptide. N-linked (GlcNAc...) asparagine glycosylation is found at Asn-31, Asn-81, Asn-106, Asn-200, Asn-222, Asn-237, Asn-262, Asn-278, Asn-285, Asn-334, Asn-391, and Asn-397. The interval 389 to 408 (PYNATNGGNSTGDGAAGTKP) is disordered. The GPI-anchor amidated serine moiety is linked to residue Ser-422. Residues 423–446 (RAGAGIITAIIGISIIACALWLVY) constitute a propeptide, removed in mature form.

It belongs to the glycosyl hydrolase 76 family.

It is found in the secreted. Its subcellular location is the cell wall. The protein resides in the cell membrane. It carries out the reaction Random hydrolysis of (1-&gt;6)-alpha-D-mannosidic linkages in unbranched (1-&gt;6)-mannans.. Required for normal synthesis of the cell wall. The protein is Mannan endo-1,6-alpha-mannosidase DCW1 (DCW1) of Candida glabrata (strain ATCC 2001 / BCRC 20586 / JCM 3761 / NBRC 0622 / NRRL Y-65 / CBS 138) (Yeast).